Here is a 98-residue protein sequence, read N- to C-terminus: NADH-ubiquinone oxidoreductase chain 4L (98 aa).

A run of 3 helical transmembrane segments spans residues 1-21, 29-49, and 61-81; these read MPYI…GTLM, SLLC…LLSL, and LILL…LVMI.

The protein belongs to the complex I subunit 4L family. Core subunit of respiratory chain NADH dehydrogenase (Complex I) which is composed of 45 different subunits.

The protein resides in the mitochondrion inner membrane. It carries out the reaction a ubiquinone + NADH + 5 H(+)(in) = a ubiquinol + NAD(+) + 4 H(+)(out). Functionally, core subunit of the mitochondrial membrane respiratory chain NADH dehydrogenase (Complex I) which catalyzes electron transfer from NADH through the respiratory chain, using ubiquinone as an electron acceptor. Part of the enzyme membrane arm which is embedded in the lipid bilayer and involved in proton translocation. The protein is NADH-ubiquinone oxidoreductase chain 4L (MT-ND4L) of Loxodonta africana (African elephant).